The following is a 469-amino-acid chain: Sulfate adenylyltransferase subunit 1 (469 aa).

The 216-residue stretch at K22 to E237 folds into the tr-type G domain. The interval G31–S38 is G1. G31–S38 is a binding site for GTP. The interval G89 to D93 is G2. The tract at residues D110–G113 is G3. GTP-binding positions include D110 to H114 and N165 to D168. A G4 region spans residues N165–D168. The interval S202–K204 is G5.

This sequence belongs to the TRAFAC class translation factor GTPase superfamily. Classic translation factor GTPase family. CysN/NodQ subfamily. As to quaternary structure, heterodimer composed of CysD, the smaller subunit, and CysN.

The enzyme catalyses sulfate + ATP + H(+) = adenosine 5'-phosphosulfate + diphosphate. It participates in sulfur metabolism; hydrogen sulfide biosynthesis; sulfite from sulfate: step 1/3. Functionally, with CysD forms the ATP sulfurylase (ATPS) that catalyzes the adenylation of sulfate producing adenosine 5'-phosphosulfate (APS) and diphosphate, the first enzymatic step in sulfur assimilation pathway. APS synthesis involves the formation of a high-energy phosphoric-sulfuric acid anhydride bond driven by GTP hydrolysis by CysN coupled to ATP hydrolysis by CysD. The chain is Sulfate adenylyltransferase subunit 1 from Methylorubrum extorquens (strain CM4 / NCIMB 13688) (Methylobacterium extorquens).